Reading from the N-terminus, the 261-residue chain is Carnitinyl-CoA dehydratase (261 aa).

Glu111 (nucleophile) is an active-site residue. The active-site Proton acceptor is the Glu131.

The protein belongs to the enoyl-CoA hydratase/isomerase family.

It carries out the reaction (R)-carnitinyl-CoA = crotonobetainyl-CoA + H2O. It participates in amine and polyamine metabolism; carnitine metabolism. In terms of biological role, catalyzes the reversible dehydration of L-carnitinyl-CoA to crotonobetainyl-CoA. In Escherichia coli (strain ATCC 8739 / DSM 1576 / NBRC 3972 / NCIMB 8545 / WDCM 00012 / Crooks), this protein is Carnitinyl-CoA dehydratase.